The primary structure comprises 238 residues: Sarcospan (238 aa).

The segment at 1–33 (MGKDRQPRGQQRQGDAAGPDDPGPKKGAGTREQ) is disordered. The Extracellular segment spans residues 1-48 (MGKDRQPRGQQRQGDAAGPDDPGPKKGAGTREQRGEEEAQTCCGCRFP). The segment covering 8–20 (RGQQRQGDAAGPD) has biased composition (low complexity). A helical membrane pass occupies residues 49–69 (LLLALLQLALGVAVTVVGFLM). At 70-81 (ASVSSSLLVRAT) the chain is on the cytoplasmic side. Residues 82 to 102 (PYWAGIIVCVVAYLGLFMLCV) form a helical membrane-spanning segment. Residues 103–117 (SYQVDERTCIQFSMK) are Cytoplasmic-facing. Residues 118-138 (LLYFVLSALGLVVCVLAVAFA) traverse the membrane as a helical segment. Over 139-188 (AHHYSLLTHLTCENAPDSCQCKLPSSEPLSRTFVYRDVTDCTSITGTFQV) the chain is Extracellular. Residues 189-209 (FLLVQMVLNLVCGLVCLVACF) traverse the membrane as a helical segment. At 210-238 (VMWKHRYQVFYVGVRMCPLSASEGQQQKV) the chain is on the cytoplasmic side.

It localises to the cell membrane. It is found in the sarcolemma. The protein localises to the postsynaptic cell membrane. Component of the dystrophin-glycoprotein complex (DGC), a complex that spans the muscle plasma membrane and forms a link between the F-actin cytoskeleton and the extracellular matrix. Preferentially associates with the sarcoglycan subcomplex of the DGC. This is Sarcospan (SSPN) from Oryctolagus cuniculus (Rabbit).